The chain runs to 450 residues: Phosphoglucosamine mutase (450 aa).

The active-site Phosphoserine intermediate is the Ser-101. Mg(2+)-binding residues include Ser-101, Asp-240, Asp-242, and Asp-244. A Phosphoserine modification is found at Ser-101.

It belongs to the phosphohexose mutase family. Mg(2+) serves as cofactor. Post-translationally, activated by phosphorylation. Phosphorylated by StkP in vivo.

The enzyme catalyses alpha-D-glucosamine 1-phosphate = D-glucosamine 6-phosphate. Functionally, catalyzes the conversion of glucosamine-6-phosphate to glucosamine-1-phosphate. This is Phosphoglucosamine mutase from Streptococcus pneumoniae (strain ATCC BAA-255 / R6).